Here is a 217-residue protein sequence, read N- to C-terminus: Probable cutinase 3 (217 aa).

A signal peptide spans 1-17; it reads MSLRSLFVAGLATLALA. 2 disulfides stabilise this stretch: Cys39/Cys118 and Cys65/Cys79. Ser129 acts as the Nucleophile in catalysis. The cysteines at positions 180 and 187 are disulfide-linked. The active site involves Asp184. His197 functions as the Proton donor/acceptor in the catalytic mechanism.

The protein belongs to the cutinase family.

It localises to the secreted. The enzyme catalyses cutin + H2O = cutin monomers.. In terms of biological role, catalyzes the hydrolysis of complex carboxylic polyesters found in the cell wall of plants. Degrades cutin, a macromolecule that forms the structure of the plant cuticle. The polypeptide is Probable cutinase 3 (Aspergillus fumigatus (strain CBS 144.89 / FGSC A1163 / CEA10) (Neosartorya fumigata)).